The following is a 346-amino-acid chain: S-adenosylmethionine:tRNA ribosyltransferase-isomerase (346 aa).

The protein belongs to the QueA family. Monomer.

It localises to the cytoplasm. It carries out the reaction 7-aminomethyl-7-carbaguanosine(34) in tRNA + S-adenosyl-L-methionine = epoxyqueuosine(34) in tRNA + adenine + L-methionine + 2 H(+). It functions in the pathway tRNA modification; tRNA-queuosine biosynthesis. Functionally, transfers and isomerizes the ribose moiety from AdoMet to the 7-aminomethyl group of 7-deazaguanine (preQ1-tRNA) to give epoxyqueuosine (oQ-tRNA). This Shewanella denitrificans (strain OS217 / ATCC BAA-1090 / DSM 15013) protein is S-adenosylmethionine:tRNA ribosyltransferase-isomerase.